The sequence spans 349 residues: Dihydroorotate dehydrogenase (quinone) (349 aa).

FMN is bound by residues 67–71 and threonine 91; that span reads AGLDK. Lysine 71 serves as a coordination point for substrate. 116 to 120 contacts substrate; sequence NRLGF. 2 residues coordinate FMN: asparagine 147 and asparagine 180. Asparagine 180 lines the substrate pocket. Serine 183 functions as the Nucleophile in the catalytic mechanism. A substrate-binding site is contributed by asparagine 185. The FMN site is built by lysine 225 and threonine 253. 254 to 255 is a binding site for substrate; the sequence is NT. FMN-binding positions include glycine 276, glycine 305, and 326–327; that span reads YT.

This sequence belongs to the dihydroorotate dehydrogenase family. Type 2 subfamily. As to quaternary structure, monomer. It depends on FMN as a cofactor.

The protein localises to the cell membrane. It catalyses the reaction (S)-dihydroorotate + a quinone = orotate + a quinol. The protein operates within pyrimidine metabolism; UMP biosynthesis via de novo pathway; orotate from (S)-dihydroorotate (quinone route): step 1/1. Its function is as follows. Catalyzes the conversion of dihydroorotate to orotate with quinone as electron acceptor. The protein is Dihydroorotate dehydrogenase (quinone) of Bordetella parapertussis (strain 12822 / ATCC BAA-587 / NCTC 13253).